The following is a 50-amino-acid chain: Apoptotic protease-activating factor 1 (50 aa).

The region spanning 1 to 31 (ILKKDNYSYISFYNALIHEGYKDLAALLHSG) is the CARD domain. One can recognise an NB-ARC domain in the interval 46 to 50 (GGITS).

In terms of assembly, monomer. Oligomerizes to a heptameric ring, known as the apoptosome, upon binding of cytochrome c and dATP. Oligomeric Apaf-1 and pro-caspase-9 bind to each other via their respective NH2-terminal CARD domains and consecutively mature caspase-9 is released from the complex. Interacts with APIP. Interacts (via CARD and NACHT domains) with NAIP/BIRC1 (via NACHT domain). Interacts with CIAO2A.

In terms of biological role, oligomeric Apaf-1 mediates the cytochrome c-dependent autocatalytic activation of pro-caspase 9 (Apaf-3), leading to the activation of caspase-3 and apoptosis. This activation requires ATP. The protein is Apoptotic protease-activating factor 1 (APAF1) of Canis lupus familiaris (Dog).